Consider the following 289-residue polypeptide: D-psicose 3-epimerase (289 aa).

Substrate-binding residues include tyrosine 6 and alanine 107. Glutamate 150 functions as the Proton donor/acceptor in the catalytic mechanism. Glutamate 150 contributes to the Mn(2+) binding site. Substrate contacts are provided by residues glutamate 156 and 183–186 (DTFH). Aspartate 183 and histidine 209 together coordinate Mn(2+). Arginine 215 serves as a coordination point for substrate. The Proton donor/acceptor role is filled by glutamate 244. Glutamate 244 is a binding site for Mn(2+).

The protein belongs to the hyi family. In terms of assembly, homotetramer. Requires Mn(2+) as cofactor. Co(2+) serves as cofactor.

It carries out the reaction D-allulose = keto-D-fructose. Inhibited by Zn(2+) and Cu(2+). Its function is as follows. Involved in the biosynthesis of D-psicose. Catalyzes the reversible epimerization of D-fructose at the C3 position to yield D-psicose. The enzyme is highly specific for D-psicose and shows very low activity with D-tagatose. The substrate specificity decreases in the following order: D-fructose, D-tagatose, D-ribulose, D-xylulose, and D-sorbose. It shows a higher level of activity for cis ketoses than for trans-ketoses. The chain is D-psicose 3-epimerase (dpe) from Agrobacterium fabrum (strain C58 / ATCC 33970) (Agrobacterium tumefaciens (strain C58)).